A 536-amino-acid polypeptide reads, in one-letter code: Phosphoenolpyruvate carboxykinase (ATP) (536 aa).

Positions 61, 195, and 201 each coordinate substrate. ATP contacts are provided by residues Lys201, His220, and 236–244; that span reads GLSGTGKTT. Mn(2+)-binding residues include Lys201 and His220. A Mn(2+)-binding site is contributed by Asp257. Residues Glu285, Arg322, and Thr447 each contribute to the ATP site. Arg322 contributes to the substrate binding site.

The protein belongs to the phosphoenolpyruvate carboxykinase (ATP) family. Requires Mn(2+) as cofactor.

The protein resides in the cytoplasm. The catalysed reaction is oxaloacetate + ATP = phosphoenolpyruvate + ADP + CO2. It participates in carbohydrate biosynthesis; gluconeogenesis. Its function is as follows. Involved in the gluconeogenesis. Catalyzes the conversion of oxaloacetate (OAA) to phosphoenolpyruvate (PEP) through direct phosphoryl transfer between the nucleoside triphosphate and OAA. This chain is Phosphoenolpyruvate carboxykinase (ATP), found in Allorhizobium ampelinum (strain ATCC BAA-846 / DSM 112012 / S4) (Agrobacterium vitis (strain S4)).